A 367-amino-acid chain; its full sequence is Ganglioside-induced differentiation-associated protein 1-like 1 (367 aa).

The region spanning 45 to 126 (ESLVLYHWTQ…YVERTFTGEH (82 aa)) is the GST N-terminal domain. A GST C-terminal domain is found at 174–341 (PKYATAEIRR…RLVKRKPPSF (168 aa)).

Belongs to the GST superfamily.

In Homo sapiens (Human), this protein is Ganglioside-induced differentiation-associated protein 1-like 1 (GDAP1L1).